Here is a 353-residue protein sequence, read N- to C-terminus: Protein MGF 360-9L (353 aa).

Belongs to the asfivirus MGF 360 family. As to quaternary structure, interacts with host STAT1; this interaction mediates STAT1 degradation through apoptosis. Interacts with host STAT2; this interaction mediates STAT2 degradation through the proteasome.

The protein resides in the host cytoplasm. Functionally, plays a role in virus cell tropism, and may be required for efficient virus replication in macrophages. In addition, inhibits IFN-beta-induced IFN-stimulated genes (ISGs) transcription. Mechanistically, degrades host STAT1 and STAT2 through apoptosis and ubiquitin-proteasome pathways respectively. The protein is Protein MGF 360-9L of African swine fever virus (isolate Tick/Malawi/Lil 20-1/1983) (ASFV).